A 430-amino-acid chain; its full sequence is MLDPNLLRTEPDAVAEKLARRGFKLDVDKLVALEERRKVLQVKTENLQAERNSRSKSIGQAKARGEDIEPLRLEVNKLGEELDAAKNELDALLAEIRDIALTLPNLPDDEVPLGKDDSENVEVSRWGTPRKFDFEIRDHVTLGETLGGLDFASAVKLTGSRFVVMKGQIARLHRALSQFMLDLHTEEHGYSENYVPYLVNHDTLYGTGQLPKFAGDLFHTRPLEEEADSSNYALIPTAEVPLTNLVRDEIIDEESLPIKMTAHTPCFRSEAGSYGRDTRGLIRMHQFDKVEMVQVVRPEDSMQALEEMTGHAEKVLQLLGLPYRKVLLCSGDMGFGARKTYDLEVWLPAQDTYREISSCSNMWDFQARRMQARCRSKSDKKTRLVHTLNGSGLAVGRTLVAVLENYQQADGRIEIPEVLRPYMKGLEFIG.

237 to 239 contacts L-serine; sequence TAE. 268 to 270 contacts ATP; that stretch reads RSE. L-serine is bound at residue glutamate 291. 355 to 358 contacts ATP; the sequence is EISS. Serine 391 provides a ligand contact to L-serine.

The protein belongs to the class-II aminoacyl-tRNA synthetase family. Type-1 seryl-tRNA synthetase subfamily. In terms of assembly, homodimer. The tRNA molecule binds across the dimer.

Its subcellular location is the cytoplasm. The enzyme catalyses tRNA(Ser) + L-serine + ATP = L-seryl-tRNA(Ser) + AMP + diphosphate + H(+). It catalyses the reaction tRNA(Sec) + L-serine + ATP = L-seryl-tRNA(Sec) + AMP + diphosphate + H(+). Its pathway is aminoacyl-tRNA biosynthesis; selenocysteinyl-tRNA(Sec) biosynthesis; L-seryl-tRNA(Sec) from L-serine and tRNA(Sec): step 1/1. Catalyzes the attachment of serine to tRNA(Ser). Is also able to aminoacylate tRNA(Sec) with serine, to form the misacylated tRNA L-seryl-tRNA(Sec), which will be further converted into selenocysteinyl-tRNA(Sec). This chain is Serine--tRNA ligase, found in Cronobacter sakazakii (strain ATCC BAA-894) (Enterobacter sakazakii).